Here is a 185-residue protein sequence, read N- to C-terminus: Translation initiation factor IF-3 (185 aa).

This sequence belongs to the IF-3 family. Monomer.

It localises to the cytoplasm. Its function is as follows. IF-3 binds to the 30S ribosomal subunit and shifts the equilibrium between 70S ribosomes and their 50S and 30S subunits in favor of the free subunits, thus enhancing the availability of 30S subunits on which protein synthesis initiation begins. In Streptococcus pneumoniae serotype 19F (strain G54), this protein is Translation initiation factor IF-3.